Reading from the N-terminus, the 34-residue chain is Photosystem II reaction center protein M (34 aa).

The chain crosses the membrane as a helical span at residues 7 to 27 (GFVASLLFILVPAIFLIVLYI).

The protein belongs to the PsbM family. In terms of assembly, PSII is composed of 1 copy each of membrane proteins PsbA, PsbB, PsbC, PsbD, PsbE, PsbF, PsbH, PsbI, PsbJ, PsbK, PsbL, PsbM, PsbT, PsbX, PsbY, PsbZ, Psb30/Ycf12, peripheral proteins PsbO, CyanoQ (PsbQ), PsbU, PsbV and a large number of cofactors. It forms dimeric complexes.

It localises to the cellular thylakoid membrane. In terms of biological role, one of the components of the core complex of photosystem II (PSII). PSII is a light-driven water:plastoquinone oxidoreductase that uses light energy to abstract electrons from H(2)O, generating O(2) and a proton gradient subsequently used for ATP formation. It consists of a core antenna complex that captures photons, and an electron transfer chain that converts photonic excitation into a charge separation. This subunit is found at the monomer-monomer interface. The polypeptide is Photosystem II reaction center protein M (Parasynechococcus marenigrum (strain WH8102)).